A 559-amino-acid polypeptide reads, in one-letter code: Tectonic-like complex member MKS1 (559 aa).

The region spanning 311–439 (LRLFVNGEVV…TVSTWRPVEL (129 aa)) is the C2 B9-type domain.

Part of the tectonic-like complex (also named B9 complex). Interacts with TMEM107. Interacts with TCTN3, AHI1, TCTN1, TCTN2, CC2D2A. Interacts with FLNA. Interacts with TMEM67. Interacts with B9D1 and B9D2.

The protein resides in the cytoplasm. It localises to the cytoskeleton. Its subcellular location is the cilium basal body. The protein localises to the microtubule organizing center. It is found in the centrosome. Its function is as follows. Component of the tectonic-like complex, a complex localized at the transition zone of primary cilia and acting as a barrier that prevents diffusion of transmembrane proteins between the cilia and plasma membranes. Involved in centrosome migration to the apical cell surface during early ciliogenesis. Required for ciliary structure and function, including a role in regulating length and appropriate number through modulating centrosome duplication. Required for cell branching morphology. The polypeptide is Tectonic-like complex member MKS1 (MKS1) (Homo sapiens (Human)).